Reading from the N-terminus, the 189-residue chain is Glycerol-3-phosphate acyltransferase (189 aa).

A run of 5 helical transmembrane segments spans residues 1-21, 50-70, 72-92, 111-131, and 151-171; these read MVWL…AVLL, KLAI…VLVA, WLGL…IGHL, MLLG…LLTF, and LLAW…ALIV.

This sequence belongs to the PlsY family. Probably interacts with PlsX.

The protein localises to the cell inner membrane. The catalysed reaction is an acyl phosphate + sn-glycerol 3-phosphate = a 1-acyl-sn-glycero-3-phosphate + phosphate. It functions in the pathway lipid metabolism; phospholipid metabolism. Catalyzes the transfer of an acyl group from acyl-phosphate (acyl-PO(4)) to glycerol-3-phosphate (G3P) to form lysophosphatidic acid (LPA). This enzyme utilizes acyl-phosphate as fatty acyl donor, but not acyl-CoA or acyl-ACP. The polypeptide is Glycerol-3-phosphate acyltransferase (Pseudomonas paraeruginosa (strain DSM 24068 / PA7) (Pseudomonas aeruginosa (strain PA7))).